Reading from the N-terminus, the 443-residue chain is MLVTSLIALLPAIAAAQVSGTVGPRTSASAKAAEKVCNVLDYGASANSTIDIGPPLKEAFQDCQTGGLVYIPEGDYLLSSWVSLVYGSGWALQLDGIIYRDKNVTDGGNMIFIEHTSDIEIFSNNSAGAIQGYGYLFHEQDEYGPRILRLNNVTDFSVHDLILVDSPAYFLNLVESYNGEVYNMVIRGASMGGLDGIDISGANYWIHDVEVTNGDECVTVKSPSANVRVENVFCNHSGGCAMGSLGTDTNISNIEFENIYTYNSTQMYMIKSNGGNGTVTNCSFKNFIGYSNAYMLDLDTYWGDESDGDGIKYENIGFENWKGTSSNGIQRSPIRILCPDANPCTNITLTAVELWTDTGDYVKQECSSAYGEGECLRQQNGTLASYSFTTTITSVPVTAYSPTTTMPGLISTSMDTTTSIPIPTIPTSFFPGASAYSTLMANM.

The signal sequence occupies residues 1 to 16 (MLVTSLIALLPAIAAA). A disulfide bridge links C37 with C63. 4 N-linked (GlcNAc...) asparagine glycosylation sites follow: N47, N103, N124, and N152. D215 acts as the Proton donor in catalysis. Residues C217 and C234 are joined by a disulfide bond. 5 N-linked (GlcNAc...) asparagine glycosylation sites follow: N235, N250, N263, N276, and N281. A disulfide bridge connects residues C338 and C344. N346 carries an N-linked (GlcNAc...) asparagine glycan. A disulfide bridge links C366 with C375. Residue N380 is glycosylated (N-linked (GlcNAc...) asparagine).

It belongs to the glycosyl hydrolase 28 family.

The protein resides in the secreted. Its function is as follows. Pectinolytic enzymes consist of four classes of enzymes: pectine lyase, polygalacturonase, pectin methylesterase and rhamnogalacturonase. Hydrolyzes alpha-D-galacturonopyranosyl-(1,2)-alpha-L-rhamnopyranosyl linkages in the backbone of the hairy regions of pectins. This is Putative rhamnogalacturonase D (rhgD) from Aspergillus niger (strain ATCC MYA-4892 / CBS 513.88 / FGSC A1513).